The chain runs to 401 residues: Argininosuccinate synthase (401 aa).

9 to 17 (AYSGGLDTS) is an ATP binding site. Tyr-87 lines the L-citrulline pocket. Residue Gly-117 participates in ATP binding. L-aspartate is bound by residues Thr-119, Asn-123, and Asp-124. Asn-123 lines the L-citrulline pocket. Positions 127, 176, 185, 261, and 273 each coordinate L-citrulline.

This sequence belongs to the argininosuccinate synthase family. Type 1 subfamily. In terms of assembly, homotetramer.

It localises to the cytoplasm. The catalysed reaction is L-citrulline + L-aspartate + ATP = 2-(N(omega)-L-arginino)succinate + AMP + diphosphate + H(+). It functions in the pathway amino-acid biosynthesis; L-arginine biosynthesis; L-arginine from L-ornithine and carbamoyl phosphate: step 2/3. The protein is Argininosuccinate synthase of Prosthecochloris aestuarii (strain DSM 271 / SK 413).